A 217-amino-acid polypeptide reads, in one-letter code: Probable transaldolase (217 aa).

Catalysis depends on lysine 83, which acts as the Schiff-base intermediate with substrate.

This sequence belongs to the transaldolase family. Type 3B subfamily.

Its subcellular location is the cytoplasm. It catalyses the reaction D-sedoheptulose 7-phosphate + D-glyceraldehyde 3-phosphate = D-erythrose 4-phosphate + beta-D-fructose 6-phosphate. It functions in the pathway carbohydrate degradation; pentose phosphate pathway; D-glyceraldehyde 3-phosphate and beta-D-fructose 6-phosphate from D-ribose 5-phosphate and D-xylulose 5-phosphate (non-oxidative stage): step 2/3. Functionally, transaldolase is important for the balance of metabolites in the pentose-phosphate pathway. The polypeptide is Probable transaldolase (Chelativorans sp. (strain BNC1)).